A 543-amino-acid chain; its full sequence is CBS domain-containing protein CBSCBSPB1 (543 aa).

A disordered region spans residues 1–35 (MASQGGPRRSLSVTTASLHGKKKSMDMAERGLDTG). Serine 17 is subject to Phosphoserine. Residues 23-35 (KSMDMAERGLDTG) are compositionally biased toward basic and acidic residues. CBS domains are found at residues 59–118 (RLSK…NVEE), 125–183 (MTKN…RAAE), 225–285 (IIPD…LPPS), and 293–350 (MTQN…AGTT). Residues 372–393 (LSPNEDDEDSRSESSMKVASEA) form a disordered region. The PB1 domain maps to 402–489 (ANTFSFKIED…KSLRLHLDDS (88 aa)). The helical transmembrane segment at 518–538 (AYSGVAAGAALVAGLGFMAFL) threads the bilayer.

It is found in the membrane. This chain is CBS domain-containing protein CBSCBSPB1 (CBSCBSPB1), found in Arabidopsis thaliana (Mouse-ear cress).